Consider the following 332-residue polypeptide: Gibberellin 2-beta-dioxygenase (332 aa).

Positions 175 to 280 constitute a Fe2OG dioxygenase domain; that stretch reads KSDSCFRLNH…RLSMIYFGGP (106 aa). Fe cation contacts are provided by histidine 204, aspartate 206, and histidine 261. Arginine 271 is a catalytic residue.

This sequence belongs to the iron/ascorbate-dependent oxidoreductase family. GA2OX subfamily. The cofactor is Fe cation.

The enzyme catalyses gibberellin A1 + 2-oxoglutarate + O2 = gibberellin A8 + succinate + CO2. Its pathway is plant hormone biosynthesis; gibberellin biosynthesis. In terms of biological role, catalyzes the 2-beta-hydroxylation of several biologically active gibberellins, leading to the homeostatic regulation of their endogenous level. Catabolism of gibberellins (GAs) plays a central role in plant development. Converts GA9/GA20 to GA51/GA29 and GA4/GA1 to GA34/GA8. The sequence is that of Gibberellin 2-beta-dioxygenase (GA2OX1) from Phaseolus coccineus (Scarlet runner bean).